The sequence spans 298 residues: Myozenin-1 (298 aa).

The segment at 1 to 34 (MPLSGTPAPNKKRKSSKLIMELTGGGQESSGLNL) is disordered. S82 bears the Phosphoserine mark. The tract at residues 105 to 173 (FSYSKGSSGG…TGTGDQAGGE (69 aa)) is disordered. Residues 118–129 (GSSSAGQYGSGQ) show a composition bias toward low complexity. The segment covering 136–172 (SGSGSGGAGGPGSQTGRGGDAGTTGVGETGTGDQAGG) has biased composition (gly residues).

It belongs to the myozenin family. In terms of assembly, interacts with ACTN2, ACTN3, FLNA, FLNB, FLNC, LDB3, PPP3CA and TCAP. Interacts via its C-terminal region with MYOT.

Its subcellular location is the nucleus. The protein localises to the cell projection. It localises to the pseudopodium. Myozenins may serve as intracellular binding proteins involved in linking Z-disk proteins such as alpha-actinin, gamma-filamin, TCAP/telethonin, LDB3/ZASP and localizing calcineurin signaling to the sarcomere. Plays an important role in the modulation of calcineurin signaling. May play a role in myofibrillogenesis. The protein is Myozenin-1 (MYOZ1) of Sus scrofa (Pig).